The chain runs to 126 residues: Aspartate 1-decarboxylase (126 aa).

The Schiff-base intermediate with substrate; via pyruvic acid role is filled by Ser-25. At Ser-25 the chain carries Pyruvic acid (Ser). Substrate is bound at residue Thr-57. Tyr-58 functions as the Proton donor in the catalytic mechanism. Gly-73–Ala-75 contributes to the substrate binding site.

It belongs to the PanD family. In terms of assembly, heterooctamer of four alpha and four beta subunits. The cofactor is pyruvate. In terms of processing, is synthesized initially as an inactive proenzyme, which is activated by self-cleavage at a specific serine bond to produce a beta-subunit with a hydroxyl group at its C-terminus and an alpha-subunit with a pyruvoyl group at its N-terminus.

Its subcellular location is the cytoplasm. The catalysed reaction is L-aspartate + H(+) = beta-alanine + CO2. Its pathway is cofactor biosynthesis; (R)-pantothenate biosynthesis; beta-alanine from L-aspartate: step 1/1. In terms of biological role, catalyzes the pyruvoyl-dependent decarboxylation of aspartate to produce beta-alanine. The protein is Aspartate 1-decarboxylase of Serratia proteamaculans (strain 568).